Reading from the N-terminus, the 461-residue chain is GTPase Der (461 aa).

2 consecutive EngA-type G domains span residues 2 to 166 (IKVA…PKKP) and 199 to 370 (IKVA…KNYS). Residues 8 to 15 (GKPNVGKS), 57 to 61 (DTGGL), 118 to 121 (NKID), 205 to 212 (GRVNVGKS), 252 to 256 (DTAGI), and 316 to 319 (NKWD) contribute to the GTP site. Residues 371-455 (KRIPTATLNK…PIIFVARKKG (85 aa)) form the KH-like domain.

This sequence belongs to the TRAFAC class TrmE-Era-EngA-EngB-Septin-like GTPase superfamily. EngA (Der) GTPase family. Associates with the 50S ribosomal subunit.

GTPase that plays an essential role in the late steps of ribosome biogenesis. The protein is GTPase Der of Nautilia profundicola (strain ATCC BAA-1463 / DSM 18972 / AmH).